Consider the following 415-residue polypeptide: Protein ROH1A (415 aa).

Residues 184–219 (VSGGGGGGGGGNKTTERSWSFGRRSGGSSAASKGGA) form a disordered region. The span at 185-195 (SGGGGGGGGGN) shows a compositional bias: gly residues. The span at 200–219 (RSWSFGRRSGGSSAASKGGA) shows a compositional bias: low complexity. Residues 263 to 283 (MFIMSTVMVFVMWVLTAAVPC) traverse the membrane as a helical segment.

This sequence belongs to the ROH1 family. Interacts with EXO70A1 and EXO70C1. Binds to EXO70C2. As to expression, mainly expressed in cells expanding in a polar manner such as pollen and root hairs.

Its subcellular location is the membrane. The protein resides in the cytoplasm. It is found in the cytosol. In terms of biological role, required for seed coat mucilage deposition. The polypeptide is Protein ROH1A (Arabidopsis thaliana (Mouse-ear cress)).